Reading from the N-terminus, the 226-residue chain is Putative N-acetylmannosamine-6-phosphate 2-epimerase (226 aa).

Belongs to the NanE family.

It carries out the reaction an N-acyl-D-glucosamine 6-phosphate = an N-acyl-D-mannosamine 6-phosphate. The protein operates within amino-sugar metabolism; N-acetylneuraminate degradation; D-fructose 6-phosphate from N-acetylneuraminate: step 3/5. Its function is as follows. Converts N-acetylmannosamine-6-phosphate (ManNAc-6-P) to N-acetylglucosamine-6-phosphate (GlcNAc-6-P). The protein is Putative N-acetylmannosamine-6-phosphate 2-epimerase of Mycoplasma capricolum subsp. capricolum (strain California kid / ATCC 27343 / NCTC 10154).